The primary structure comprises 152 residues: Ribonuclease pancreatic gamma-type (152 aa).

The N-terminal stretch at 1-25 (MGLEKSLFLFSLLVLVLGWVQPSLG) is a signal peptide. K35 and R38 together coordinate substrate. H40 acts as the Proton acceptor in catalysis. Intrachain disulfides connect C54/C112, C68/C123, C86/C138, and C93/C100. Substrate is bound by residues 69-73 (KSMNT), K94, and R113. H147 serves as the catalytic Proton donor.

The protein belongs to the pancreatic ribonuclease family. In terms of assembly, monomer.

It is found in the secreted. It catalyses the reaction an [RNA] containing cytidine + H2O = an [RNA]-3'-cytidine-3'-phosphate + a 5'-hydroxy-ribonucleotide-3'-[RNA].. It carries out the reaction an [RNA] containing uridine + H2O = an [RNA]-3'-uridine-3'-phosphate + a 5'-hydroxy-ribonucleotide-3'-[RNA].. In terms of biological role, endonuclease that catalyzes the cleavage of RNA on the 3' side of pyrimidine nucleotides. Acts on single-stranded and double-stranded RNA. The chain is Ribonuclease pancreatic gamma-type from Rattus norvegicus (Rat).